Consider the following 316-residue polypeptide: 4-diphosphocytidyl-2-C-methyl-D-erythritol kinase (316 aa).

Residue Lys32 is part of the active site. Position 126–136 (126–136 (PVGAGLGGGSA)) interacts with ATP. Residue Asp168 is part of the active site.

Belongs to the GHMP kinase family. IspE subfamily.

The enzyme catalyses 4-CDP-2-C-methyl-D-erythritol + ATP = 4-CDP-2-C-methyl-D-erythritol 2-phosphate + ADP + H(+). It participates in isoprenoid biosynthesis; isopentenyl diphosphate biosynthesis via DXP pathway; isopentenyl diphosphate from 1-deoxy-D-xylulose 5-phosphate: step 3/6. Its function is as follows. Catalyzes the phosphorylation of the position 2 hydroxy group of 4-diphosphocytidyl-2C-methyl-D-erythritol. This chain is 4-diphosphocytidyl-2-C-methyl-D-erythritol kinase, found in Bifidobacterium longum (strain DJO10A).